A 312-amino-acid polypeptide reads, in one-letter code: DDRGK domain-containing protein 1 (312 aa).

The Lumenal portion of the chain corresponds to 1 to 2; the sequence is ME. The helical transmembrane segment at 3-23 threads the bilayer; the sequence is LIILVGIAIALLVVIITLYLL. Residues 24-312 are Cytoplasmic-facing; sequence QKKNAAPETK…ISAGGEEASS (289 aa). A disordered region spans residues 30–163; it reads PETKPAAAPQ…KQQEDLEAEV (134 aa). A compositionally biased stretch (low complexity) spans 52 to 85; sequence RRAQIARNQRNRLRQNAPAAPAGQVAPAAGAPAA. A compositionally biased stretch (acidic residues) spans 90 to 99; sequence DHEDEGQVDA. Positions 110 to 163 are enriched in basic and acidic residues; sequence LDEKMGAKKRAKMEAKEQKRLQREQELHDREQRKVKEAKEEAERKQQEDLEAEV.

The protein belongs to the DDRGK1 family. In terms of assembly, interacts with Atg9; the interaction is transient.

It is found in the endoplasmic reticulum membrane. In terms of biological role, substrate adapter for ufmylation, the covalent attachment of the ubiquitin-like modifier UFM1 to substrate proteins. Required for ufmylation of Atg9; protects the nervous system during aging, possibly by stabilizing Atg9 and supporting its function. This is DDRGK domain-containing protein 1 from Drosophila erecta (Fruit fly).